A 103-amino-acid chain; its full sequence is MQNQRIRIRLKAFDHKLIDASTQEIVETAKRTGAQVRGPIPLPTRKERYTVLVSPHVNKDARDQYEIRTYKRLLDIVEPTEKTVDALMKLDLAAGVEVQISLG.

The protein belongs to the universal ribosomal protein uS10 family. In terms of assembly, part of the 30S ribosomal subunit.

In terms of biological role, involved in the binding of tRNA to the ribosomes. This is Small ribosomal subunit protein uS10 from Saccharophagus degradans (strain 2-40 / ATCC 43961 / DSM 17024).